Here is a 126-residue protein sequence, read N- to C-terminus: MTWQAYIDTNLIGSGFISAQILSSADGSSWANSNGFSVSATEAQHILSCFKDSNKASAMGITINNVKNFVLKADDKSIYAKKDAGGVVLVKTNQTILVAVYNSNLQPGAAANACEALGDYLREQGF.

It belongs to the profilin family. As to quaternary structure, occurs in many kinds of cells as a complex with monomeric actin in a 1:1 ratio.

It is found in the cytoplasm. Its subcellular location is the cytoskeleton. Binds to actin and affects the structure of the cytoskeleton. At high concentrations, profilin prevents the polymerization of actin, whereas it enhances it at low concentrations. By binding to PIP2, it inhibits the formation of IP3 and DG. This chain is Profilin-3 (proC), found in Dictyostelium discoideum (Social amoeba).